Here is a 1403-residue protein sequence, read N- to C-terminus: Centrosomal protein of 162 kDa (1403 aa).

The segment at L20–D46 is disordered. Positions P35–D46 are enriched in basic and acidic residues. A phosphoserine mark is found at S160 and S163. Disordered stretches follow at residues L169–N243, V256–D292, S306–L348, and N453–R606. A compositionally biased stretch (acidic residues) spans P178–D208. Residues L210–T238 show a composition bias toward basic and acidic residues. The segment covering P485–P500 has biased composition (basic residues). Composition is skewed to basic and acidic residues over residues L526–K536 and P571–D585. Residues K614–R1124 adopt a coiled-coil conformation. A disordered region spans residues I1126–G1147. Over residues R1128–R1144 the composition is skewed to basic and acidic residues. The stretch at E1174–Q1386 forms a coiled coil.

The protein belongs to the CEP162 family. Interacts with CPNE4. Interacts with alpha-tubulin. Interacts with CEP290.

The protein resides in the cytoplasm. The protein localises to the cytoskeleton. It localises to the microtubule organizing center. It is found in the centrosome. Its subcellular location is the centriole. The protein resides in the spindle. The protein localises to the nucleus. Its function is as follows. Required to promote assembly of the transition zone in primary cilia. Acts by specifically recognizing and binding the axonemal microtubule. Localizes to the distal ends of centrioles before ciliogenesis and directly binds to axonemal microtubule, thereby promoting and restricting transition zone formation specifically at the cilia base. Required to mediate CEP290 association with microtubules. The polypeptide is Centrosomal protein of 162 kDa (Cep162) (Mus musculus (Mouse)).